Reading from the N-terminus, the 335-residue chain is Luciferase-like monooxygenase (335 aa).

To bacterial alkanal monooxygenase alpha and beta chains.

This chain is Luciferase-like monooxygenase (yhbW), found in Escherichia coli O6:H1 (strain CFT073 / ATCC 700928 / UPEC).